The chain runs to 478 residues: Trigger factor (478 aa).

The tract at residues Met-1 to Gln-41 is disordered. One can recognise a PPIase FKBP-type domain in the interval Gly-197–Pro-279. Residues Val-455 to Asn-472 are compositionally biased toward basic and acidic residues. The interval Val-455–Thr-478 is disordered.

This sequence belongs to the FKBP-type PPIase family. Tig subfamily.

Its subcellular location is the cytoplasm. The catalysed reaction is [protein]-peptidylproline (omega=180) = [protein]-peptidylproline (omega=0). Involved in protein export. Acts as a chaperone by maintaining the newly synthesized protein in an open conformation. Functions as a peptidyl-prolyl cis-trans isomerase. This Aquifex aeolicus (strain VF5) protein is Trigger factor.